A 524-amino-acid polypeptide reads, in one-letter code: Serine/threonine-protein kinase PAK 2 (524 aa).

A disordered region spans residues 1 to 81; sequence MSDNGELEDK…PEISPPSDFE (81 aa). An N-acetylserine modification is found at S2. Phosphoserine occurs at positions 2, 20, 55, and 58. Position 60 is a phosphothreonine (T60). K62 carries the N6-acetyllysine modification. S64 is subject to Phosphoserine. The span at 67-81 shows a compositional bias: basic and acidic residues; that stretch reads KEKERPEISPPSDFE. Residues 69 to 112 form a GTPase-binding region; that stretch reads KERPEISPPSDFEHTIHVGFDAVTGEFTGMPEQWARLLQTSNIT. Residues 69–137 are autoregulatory region; it reads KERPEISPPS…KFYDSNTVKQ (69 aa). Residues 74 to 87 form the CRIB domain; the sequence is ISPPSDFEHTIHVG. Residue K128 is modified to N6-acetyllysine. T134 carries the phosphothreonine modification. Residue Y139 is modified to Phosphotyrosine. The residue at position 141 (S141) is a Phosphoserine. Residues 142–188 form a disordered region; sequence FTPPEKDGFPSGTPALNTKGSETSAVVTEEDDDDEDAAPPVIAPRPD. Phosphothreonine is present on T143. S152 bears the Phosphoserine mark. Residues T154, T159, and T169 each carry the phosphothreonine modification. The segment covering 155–167 has biased composition (polar residues); that stretch reads PALNTKGSETSAV. The span at 169–178 shows a compositional bias: acidic residues; the sequence is TEEDDDDEDA. The residue at position 197 (S197) is a Phosphoserine. The disordered stretch occupies residues 204-228; sequence APVGDSNVDSGAKSSDKQKKKAKMT. A Nuclear localization signal motif is present at residues 245–251; it reads PKKKYTR. The 251-residue stretch at 249 to 499 folds into the Protein kinase domain; sequence YTRYEKIGQG…SAKELLQHPF (251 aa). ATP contacts are provided by residues 255–263 and K278; that span reads IGQGASGTV. Catalysis depends on R367, which acts as the Proton acceptor. Phosphothreonine; by autocatalysis is present on T402.

Belongs to the protein kinase superfamily. STE Ser/Thr protein kinase family. STE20 subfamily. Interacts tightly with GTP-bound but not GDP-bound CDC42/p21 and RAC1. Interacts with SH3MD4. Interacts with SCRIB. Interacts with ARHGEF7 and GIT1. PAK-2p34 interacts with ARHGAP10. Interacts with RAC1. In terms of processing, full-length PAK2 is autophosphorylated when activated by CDC42/p21. Following cleavage, both peptides, PAK-2p27 and PAK-2p34, become highly autophosphorylated. Autophosphorylation of PAK-2p27 can occur in the absence of any effectors and is dependent on phosphorylation of Thr-402, because PAK-2p27 is acting as an exogenous substrate. Post-translationally, during apoptosis proteolytically cleaved by caspase-3 or caspase-3-like proteases to yield active PAK-2p34. Ubiquitinated, leading to its proteasomal degradation.

It localises to the cytoplasm. The protein localises to the nucleus. The protein resides in the perinuclear region. Its subcellular location is the membrane. It carries out the reaction L-seryl-[protein] + ATP = O-phospho-L-seryl-[protein] + ADP + H(+). The enzyme catalyses L-threonyl-[protein] + ATP = O-phospho-L-threonyl-[protein] + ADP + H(+). Activated by binding small G proteins. Binding of GTP-bound CDC42 or RAC1 to the autoregulatory region releases monomers from the autoinhibited dimer, enables phosphorylation of Thr-402 and allows the kinase domain to adopt an active structure. Following caspase cleavage, autophosphorylated PAK-2p34 is constitutively active. Its function is as follows. Serine/threonine protein kinase that plays a role in a variety of different signaling pathways including cytoskeleton regulation, cell motility, cell cycle progression, apoptosis or proliferation. Acts as a downstream effector of the small GTPases CDC42 and RAC1. Activation by the binding of active CDC42 and RAC1 results in a conformational change and a subsequent autophosphorylation on several serine and/or threonine residues. Full-length PAK2 stimulates cell survival and cell growth. Phosphorylates MAPK4 and MAPK6 and activates the downstream target MAPKAPK5, a regulator of F-actin polymerization and cell migration. Phosphorylates JUN and plays an important role in EGF-induced cell proliferation. Phosphorylates many other substrates including histone H4 to promote assembly of H3.3 and H4 into nucleosomes, BAD, ribosomal protein S6, or MBP. Phosphorylates CASP7, thereby preventing its activity. Additionally, associates with ARHGEF7 and GIT1 to perform kinase-independent functions such as spindle orientation control during mitosis. On the other hand, apoptotic stimuli such as DNA damage lead to caspase-mediated cleavage of PAK2, generating PAK-2p34, an active p34 fragment that translocates to the nucleus and promotes cellular apoptosis involving the JNK signaling pathway. Caspase-activated PAK2 phosphorylates MKNK1 and reduces cellular translation. This Mus musculus (Mouse) protein is Serine/threonine-protein kinase PAK 2 (Pak2).